Here is a 932-residue protein sequence, read N- to C-terminus: UPF0182 protein Dred_1797 (932 aa).

Helical transmembrane passes span 11 to 31, 53 to 73, 118 to 138, 180 to 200, 209 to 229, 264 to 284, and 292 to 312; these read LVIL…GLYI, IGLR…NLML, LTLA…SSVA, ILAS…LVTD, IFRF…FFVI, YKAL…NIFL, and YAIG…PAII. Residues 861–883 form a disordered region; that stretch reads DRPQQGVPPATDQPAGQQPAPEK.

It belongs to the UPF0182 family.

Its subcellular location is the cell membrane. The protein is UPF0182 protein Dred_1797 of Desulforamulus reducens (strain ATCC BAA-1160 / DSM 100696 / MI-1) (Desulfotomaculum reducens).